A 502-amino-acid polypeptide reads, in one-letter code: CDP-diacylglycerol--glycerol-3-phosphate 3-phosphatidyltransferase (502 aa).

58–65 (STLYIGKE) contacts ATP. 2 PLD phosphodiesterase domains span residues 143-169 (GWGL…SRDY) and 410-443 (KGNT…TSRS). Residues His-148, Lys-150, and Asp-155 contribute to the active site.

Belongs to the CDP-alcohol phosphatidyltransferase class-II family.

Its subcellular location is the mitochondrion. It carries out the reaction a CDP-1,2-diacyl-sn-glycerol + sn-glycerol 3-phosphate = a 1,2-diacyl-sn-glycero-3-phospho-(1'-sn-glycero-3'-phosphate) + CMP + H(+). The protein operates within phospholipid metabolism; phosphatidylglycerol biosynthesis; phosphatidylglycerol from CDP-diacylglycerol: step 1/2. In terms of biological role, functions in the biosynthesis of the anionic phospholipids phosphatidylglycerol and cardiolipin. This is CDP-diacylglycerol--glycerol-3-phosphate 3-phosphatidyltransferase (pgs1) from Schizosaccharomyces pombe (strain 972 / ATCC 24843) (Fission yeast).